A 948-amino-acid chain; its full sequence is UvrABC system protein A (948 aa).

Position 42-49 (42-49 (GLSGSGKS)) interacts with ATP. A C4-type zinc finger spans residues 262–289 (CPVCSYSLPELEPRLFSFNNPMGSCPTC). ABC transporter domains follow at residues 319–596 (WDKR…ENSV) and 616–945 (VNPG…KYLK). 649–656 (GVSGSGKS) provides a ligand contact to ATP. The C4-type zinc-finger motif lies at 748–774 (CEACQGDGVIKVEMHFLPDVYVPCEVC).

This sequence belongs to the ABC transporter superfamily. UvrA family. Forms a heterotetramer with UvrB during the search for lesions.

The protein resides in the cytoplasm. Its function is as follows. The UvrABC repair system catalyzes the recognition and processing of DNA lesions. UvrA is an ATPase and a DNA-binding protein. A damage recognition complex composed of 2 UvrA and 2 UvrB subunits scans DNA for abnormalities. When the presence of a lesion has been verified by UvrB, the UvrA molecules dissociate. This Neisseria meningitidis serogroup A / serotype 4A (strain DSM 15465 / Z2491) protein is UvrABC system protein A.